Here is a 312-residue protein sequence, read N- to C-terminus: Speedy protein A (312 aa).

The segment at 67–199 (RQEMTAFFKL…SHYIWQRERS (133 aa)) is speedy/Ringo box; Required for CDK-binding. S221 is subject to Phosphoserine. The residue at position 223 (T223) is a Phosphothreonine.

The protein belongs to the Speedy/Ringo family. In terms of assembly, interacts with CDK1. Interacts with CDK2. May interact with CDKN1B/KIP1. Identified in a complex with CDK2 and CDKN1B/KIP1, where it interacts primarily with CDK2.

It is found in the nucleus. Functionally, regulates the G1/S phase transition of the cell cycle by binding and activating CDK1 and CDK2. Contributes to CDK2 activation without promoting CDK2 phosphorylation, by inducing a conformation change of the CDK2 T-loop that obstructs the substrate-binding cleft prior to kinase activation. Interferes with CDKN1B-mediated inhibition of CDK2. Mediates cell survival during the DNA damage process through activation of CDK2. This chain is Speedy protein A, found in Rattus norvegicus (Rat).